Consider the following 595-residue polypeptide: Tripeptidyl-peptidase SED3 (595 aa).

The signal sequence occupies residues 1 to 22; the sequence is MLLPWQQTIIILFLGVNSLVAA. Positions 23-201 are cleaved as a propeptide — removed in mature form; it reads LRNTYRTVEE…KLETIQLSSN (179 aa). 3 N-linked (GlcNAc...) asparagine glycosylation sites follow: Asn207, Asn264, and Asn278. Positions 209–595 constitute a Peptidase S53 domain; that stretch reads TITPQCLRDI…EILAKIVRDL (387 aa). Active-site charge relay system residues include Glu285 and Asp289. Residues Asn298 and Asn365 are each glycosylated (N-linked (GlcNAc...) asparagine). The active-site Charge relay system is Ser499. The Ca(2+) site is built by Asp541 and Ile542. 3 N-linked (GlcNAc...) asparagine glycosylation sites follow: Asn554, Asn557, and Asn569. Positions 573 and 575 each coordinate Ca(2+).

The cofactor is Ca(2+).

Its subcellular location is the secreted. It localises to the extracellular space. The catalysed reaction is Release of an N-terminal tripeptide from a polypeptide.. Functionally, secreted tripeptidyl-peptidase which degrades proteins at acidic pHs and is involved in virulence. The polypeptide is Tripeptidyl-peptidase SED3 (SED3) (Arthroderma otae (strain ATCC MYA-4605 / CBS 113480) (Microsporum canis)).